The sequence spans 305 residues: NADH-ubiquinone oxidoreductase chain 1 (305 aa).

8 consecutive transmembrane segments (helical) span residues 1–21, 75–95, 101–121, 134–154, 173–193, 219–239, 249–269, and 285–305; these read MWVLINLLILMIMVLISVAFL, MLMFFLSLVMWILYPWFGFMY, ILFMLLVLGLSVYPVLFVGWI, LVSTMISFEINLFFLVFSLMM, FAILLYPLYLMMFTSMLIELN, FVLIFLSEYMNIMFMSVILSL, IKFILIYLFHICLIIWIRGIL, and MLMLVMIYLMYLYFMKEFLCI.

This sequence belongs to the complex I subunit 1 family.

The protein resides in the mitochondrion inner membrane. It carries out the reaction a ubiquinone + NADH + 5 H(+)(in) = a ubiquinol + NAD(+) + 4 H(+)(out). Functionally, core subunit of the mitochondrial membrane respiratory chain NADH dehydrogenase (Complex I) that is believed to belong to the minimal assembly required for catalysis. Complex I functions in the transfer of electrons from NADH to the respiratory chain. The immediate electron acceptor for the enzyme is believed to be ubiquinone. In Apis mellifera ligustica (Common honeybee), this protein is NADH-ubiquinone oxidoreductase chain 1 (ND1).